A 432-amino-acid polypeptide reads, in one-letter code: Asparagine--tRNA ligase 2 (432 aa).

The protein belongs to the class-II aminoacyl-tRNA synthetase family. Homodimer.

The protein localises to the cytoplasm. It carries out the reaction tRNA(Asn) + L-asparagine + ATP = L-asparaginyl-tRNA(Asn) + AMP + diphosphate + H(+). The sequence is that of Asparagine--tRNA ligase 2 (asnS2) from Lactiplantibacillus plantarum (strain ATCC BAA-793 / NCIMB 8826 / WCFS1) (Lactobacillus plantarum).